The sequence spans 612 residues: GPI mannosyltransferase 3 (612 aa).

A run of 2 helical transmembrane segments spans residues L92 to M112 and V145 to I165. N188 carries N-linked (GlcNAc...) asparagine glycosylation. The next 3 membrane-spanning stretches (helical) occupy residues I192 to I212, R254 to L274, and I288 to N308. Residue N321 is glycosylated (N-linked (GlcNAc...) asparagine). A helical transmembrane segment spans residues L339 to F359. N361 carries N-linked (GlcNAc...) asparagine glycosylation. 3 helical membrane-spanning segments follow: residues F371 to L391, F398 to A418, and E429 to Q449. N-linked (GlcNAc...) asparagine glycans are attached at residues N508, N526, and N550.

It belongs to the glycosyltransferase 22 family. PIGB subfamily.

The protein localises to the endoplasmic reticulum membrane. The protein operates within glycolipid biosynthesis; glycosylphosphatidylinositol-anchor biosynthesis. Mannosyltransferase involved in glycosylphosphatidylinositol-anchor biosynthesis. Transfers the third mannose to Man2-GlcN-acyl-PI during GPI precursor assembly. The protein is GPI mannosyltransferase 3 (GPI10) of Candida glabrata (strain ATCC 2001 / BCRC 20586 / JCM 3761 / NBRC 0622 / NRRL Y-65 / CBS 138) (Yeast).